A 192-amino-acid chain; its full sequence is Probable nicotinate-nucleotide adenylyltransferase (192 aa).

The protein belongs to the NadD family.

The catalysed reaction is nicotinate beta-D-ribonucleotide + ATP + H(+) = deamido-NAD(+) + diphosphate. It participates in cofactor biosynthesis; NAD(+) biosynthesis; deamido-NAD(+) from nicotinate D-ribonucleotide: step 1/1. In terms of biological role, catalyzes the reversible adenylation of nicotinate mononucleotide (NaMN) to nicotinic acid adenine dinucleotide (NaAD). The protein is Probable nicotinate-nucleotide adenylyltransferase of Bradyrhizobium sp. (strain ORS 278).